We begin with the raw amino-acid sequence, 396 residues long: Acetylornithine aminotransferase 2 (396 aa).

Residues Gly102–Ala103 and Phe134 contribute to the pyridoxal 5'-phosphate site. A N(2)-acetyl-L-ornithine-binding site is contributed by Arg137. Position 219-222 (Asp219–Gln222) interacts with pyridoxal 5'-phosphate. Residue Lys248 is modified to N6-(pyridoxal phosphate)lysine. Residue Thr276 coordinates pyridoxal 5'-phosphate.

Belongs to the class-III pyridoxal-phosphate-dependent aminotransferase family. ArgD subfamily. As to quaternary structure, homodimer. It depends on pyridoxal 5'-phosphate as a cofactor.

It is found in the cytoplasm. The catalysed reaction is N(2)-acetyl-L-ornithine + 2-oxoglutarate = N-acetyl-L-glutamate 5-semialdehyde + L-glutamate. The protein operates within amino-acid biosynthesis; L-arginine biosynthesis; N(2)-acetyl-L-ornithine from L-glutamate: step 4/4. The chain is Acetylornithine aminotransferase 2 from Bordetella bronchiseptica (strain ATCC BAA-588 / NCTC 13252 / RB50) (Alcaligenes bronchisepticus).